The sequence spans 942 residues: MNIGSLLHSSMLGKQFQSNQSQQEVVSNNIAECNENNNNNNNNNNNNNNSNNNNNNNNNNNNNNNNNNNNNNDNNNNSNNNKININESSQSITETVRSPYSSPSSSISSPSRSPSPNSPASSSPIHSPIPNTNFKQSGEYQSIPSPQNIHGLNKKVKVDMLESPNSSNSSPSFSSNMSPSSSNSPRHRSNSTSNNKSLLQYQFNQSNQSPSFSPLRNNKNNNNINNNNNNNNNNNNNNNNNNNQSPSMNGSPSSNLSKSNSGIPPLQLQAPSNTSSPQLLSPNHNQQRISPNRYLNGGNNNHNNNNNNNNNNNNNNNNNNNNNNNNHNNHNNNNNNNNNNNNNNNNNNNNNNNNNNNNNNNNNNNNNNNNNNINNNNINNNNHNYNHNQNHNHNHNYNNNNQNNQNNNNDDNFSPSHSPNLSPSNYNSSPTHYGNNNNDTPKRSHASYKNNNNNNNNNNNSNSSFDEYQPQQKVSRSNSPNNDKEKKRRTRLKKEQADILKTFFDNDDYPTKDDKETLANRLGMSYCAVTTWFSNKRQEKKRRGDVAPVQTGGRRVPIDDEDDYENRNGDNSPSRNQGGAIELLKNSSSGLTPILESLNVKQQNNINFFKNNNMDNNNKNVPHLSLSNNNNNNNNNNNNNNNNNNNNNNNNRNRNNNNIYNNNNNNNNNNSNNRGKNFSDSGSSDSDSELNRHNNNNNNNSNNYNNGNSNSNNNRNNNNNYNYNNYINNNNYNNNNNRQHCDDEEEDEQYFNNNNNNNNNNNNNRISDSSDDQYFSDDTNNNNDNYNNGNNNYNNNNNNNNFNNNYMNNYNNNYNNNNYNNNNSYNNSNGNNNFNNNNNNNNQNNNNNNNNNQYNNNNKNYLNNIPSSKKHQLQGNYERRNSLPNSQIQNNFNGDNNNNNNNKNNNNNNQNNNGNGNNNNNNNNDNNIYKRRHSMDDDCQQN.

Low complexity-rich tracts occupy residues 32–87 (ECNE…NINE) and 98–130 (SPYS…SPIP). Disordered regions lie at residues 32–149 (ECNE…PQNI), 161–494 (LESP…RLKK), 537–580 (RQEK…QGGA), and 609–942 (FKNN…CQQN). Polar residues predominate over residues 131 to 149 (NTNFKQSGEYQSIPSPQNI). Over residues 163-261 (SPNSSNSSPS…PSSNLSKSNS (99 aa)) the composition is skewed to low complexity. Residues 269 to 290 (QAPSNTSSPQLLSPNHNQQRIS) show a composition bias toward polar residues. 2 stretches are compositionally biased toward low complexity: residues 299-430 (NNNH…NSSP) and 450-464 (NNNN…SNSS). Polar residues predominate over residues 465-481 (FDEYQPQQKVSRSNSPN). A DNA-binding region (homeobox) is located at residues 485–544 (EKKRRTRLKKEQADILKTFFDNDDYPTKDDKETLANRLGMSYCAVTTWFSNKRQEKKRRG). Low complexity-rich tracts occupy residues 609–621 (FKNN…NKNV), 628–685 (NNNN…GSSD), 694–737 (NNNN…NNNN), 752–764 (NNNN…NNNN), 776–864 (SDDT…YLNN), and 890–927 (NNFN…NDNN). Positions 835-865 (NNNNNNNNQNNNNNNNNNQYNNNNKNYLNNI) form a coiled coil.

Its subcellular location is the nucleus. Its function is as follows. Putative transcription factor that may potentiate the function of warA. This Dictyostelium discoideum (Social amoeba) protein is Homeobox protein 2 (hbx2).